Here is a 115-residue protein sequence, read N- to C-terminus: MASPPAQERPDVPLHGGFTRFELELEFVQCLANPVYLNYLATQKYFDKPEFVAYLDYLQYFAEPKYIKFLHHPGPTLRALELLQQERFRQDIITPGLANKLQIEGQRNAVPSQKD.

The protein belongs to the Mediator complex subunit 31 family. In terms of assembly, component of the Mediator complex.

The protein localises to the nucleus. Component of the Mediator complex, a coactivator involved in the regulated transcription of nearly all RNA polymerase II-dependent genes. Mediator functions as a bridge to convey information from gene-specific regulatory proteins to the basal RNA polymerase II transcription machinery. Mediator is recruited to promoters by direct interactions with regulatory proteins and serves as a scaffold for the assembly of a functional preinitiation complex with RNA polymerase II and the general transcription factors. The polypeptide is Mediator of RNA polymerase II transcription subunit 31 (SOH1) (Phaeosphaeria nodorum (strain SN15 / ATCC MYA-4574 / FGSC 10173) (Glume blotch fungus)).